Reading from the N-terminus, the 89-residue chain is Small ribosomal subunit protein uS17 (89 aa).

This sequence belongs to the universal ribosomal protein uS17 family. In terms of assembly, part of the 30S ribosomal subunit.

Functionally, one of the primary rRNA binding proteins, it binds specifically to the 5'-end of 16S ribosomal RNA. The polypeptide is Small ribosomal subunit protein uS17 (Aromatoleum aromaticum (strain DSM 19018 / LMG 30748 / EbN1) (Azoarcus sp. (strain EbN1))).